The following is a 248-amino-acid chain: Small ribosomal subunit protein uS3 (248 aa).

The KH type-2 domain maps to 39–111; the sequence is IRKYLNKVYK…EIVFNVVEVK (73 aa). The interval 222–248 is disordered; it reads KPFEASAPRPQRRNRKEANNYVNAKKN.

It belongs to the universal ribosomal protein uS3 family. In terms of assembly, part of the 30S ribosomal subunit. Forms a tight complex with proteins S10 and S14.

In terms of biological role, binds the lower part of the 30S subunit head. Binds mRNA in the 70S ribosome, positioning it for translation. This is Small ribosomal subunit protein uS3 from Alteracholeplasma palmae (strain ATCC 49389 / J233) (Acholeplasma palmae).